The following is a 229-amino-acid chain: 2-C-methyl-D-erythritol 4-phosphate cytidylyltransferase (229 aa).

The protein belongs to the IspD/TarI cytidylyltransferase family. IspD subfamily.

It catalyses the reaction 2-C-methyl-D-erythritol 4-phosphate + CTP + H(+) = 4-CDP-2-C-methyl-D-erythritol + diphosphate. Its pathway is isoprenoid biosynthesis; isopentenyl diphosphate biosynthesis via DXP pathway; isopentenyl diphosphate from 1-deoxy-D-xylulose 5-phosphate: step 2/6. Functionally, catalyzes the formation of 4-diphosphocytidyl-2-C-methyl-D-erythritol from CTP and 2-C-methyl-D-erythritol 4-phosphate (MEP). The protein is 2-C-methyl-D-erythritol 4-phosphate cytidylyltransferase of Neisseria meningitidis serogroup B (strain ATCC BAA-335 / MC58).